The primary structure comprises 344 residues: RNA-binding protein squid (344 aa).

The segment at 1 to 55 (MAENKQVDTEINGEDFTKDVTADGPGSENGDAGAAGSTNGSSDNQSAASGQRDDD) is disordered. Positions 36 to 49 (GSTNGSSDNQSAAS) are enriched in polar residues. RRM domains lie at 56 to 138 (RKLF…HGKI) and 136 to 213 (GKIF…RATP). Phosphoserine is present on Ser148. Disordered stretches follow at residues 214–238 (KPEN…RGGY) and 301–344 (GGGG…HQPY). Positions 215 to 254 (PENQMMGGMRGGPRGGMRGGRGGYGGRGGYNNQWDGQGSY) are M9-like motif. Gly residues-rich tracts occupy residues 222 to 238 (GMRG…RGGY) and 301 to 337 (GGGG…GGGR). Residues 300–338 (GGGGGGNMGGGRGGPRGGGGPKGGGGFNGGKQRGGGGRQ) are M9 motif.

In terms of assembly, interacts with bru1/Bruno; the interaction is direct but weak, and may play a role in regulation of grk mRNA localization and translation. Interacts (probably via M9 and M9-like motifs) with Tnpo/Transportin; the interaction is direct and is involved in nuclear localization. Interacts with fs(1)K10 (via N-terminus); may be involved in localization of sqd in the oocyte during oogenesis. As to quaternary structure, interacts (via C-terminus) with Hrb27C; the interaction is RNA dependent. Does not interact with Tnpo/Transportin. Interacts with fs(1)K10 (via N-terminus); may be involved in localization of sqd in the oocyte during oogenesis. In terms of assembly, interacts (probably via M9-like motif) with Tnpo/Transportin; the interaction is direct and is involved in nuclear localization. Interacts with fs(1)K10 (via N-terminus); may be involved in localization of sqd in the oocyte during oogenesis.

It localises to the nucleus. Its subcellular location is the cytoplasm. Component of ribonucleosomes. Could be needed to organize a concentration gradient of a dorsalizing morphogen (Dm) originating in the germinal vesicle. At least one of the isoforms is essential in somatic tissues. Interacts with grk mRNA (via 3' UTR) and involved in its localization to the dorsal anterior region of the oocyte during dorsal-ventral axis determination; may function as a ribonuclear protein complex together with otu and Hrb27C. Required for polytene chromosome dispersal in nurse cells during oogenesis; nuclear isoforms play a greater role in this than cytoplasmic isoforms. In terms of biological role, required nonredundantly with isoform A/sqdA for dorsoventral pattern determination during oogenesis. May be important in somatic tissues. Functionally, required nonredundantly with isoform B/SqdS for dorsoventral pattern determination during oogenesis. Its function is as follows. May lack a role in dorsoventral pattern determination during oogenesis. May be important in somatic tissues. The sequence is that of RNA-binding protein squid from Drosophila melanogaster (Fruit fly).